Here is a 373-residue protein sequence, read N- to C-terminus: Heterogeneous nuclear ribonucleoprotein A3 homolog 1 (373 aa).

The tract at residues 1-25 is disordered; that stretch reads MPRGGMDDHWPSSDDQGHDPKEPEQ. RRM domains are found at residues 27–110 and 118–206; these read RKLF…DSAR and KKIF…SAQR. Disordered stretches follow at residues 196 to 218 and 319 to 373; these read KQEM…FMGR and DFGN…GRRF. Over residues 207–218 the composition is skewed to gly residues; that stretch reads GRGGGGSNFMGR. A compositionally biased stretch (low complexity) spans 319–333; it reads DFGNYGGQQQSNYGP. Residues 334 to 373 are compositionally biased toward gly residues; that stretch reads MKGGSFSGRSSGGSGSGPYGGGYGSGGGGGGGGSYGGRRF.

Its subcellular location is the nucleus. This Xenopus laevis (African clawed frog) protein is Heterogeneous nuclear ribonucleoprotein A3 homolog 1.